Here is an 81-residue protein sequence, read N- to C-terminus: Serine/arginine-rich splicing factor 6 (81 aa).

Over residues 1–48 (RSRSRSRRSSRSRSRSISKSRSRSRSRSKGRSRSRSKGRKSRSKSKSK) the composition is skewed to basic residues. Positions 1-81 (RSRSRSRRSS…SRSRSRSRSP (81 aa)) are disordered. The segment covering 62 to 71 (RSKDEYEKSR) has biased composition (basic and acidic residues). Residues 72 to 81 (SRSRSRSRSP) show a composition bias toward basic residues.

Belongs to the splicing factor SR family. Binds SREK1/SFRS12. Interacts with DYRK1A. In terms of processing, extensively phosphorylated on serine residues in the RS domain. Phosphorylated by DYRK1A, probably in the RS domain. Phosphorylation by DYRK1A modulates alternative splice site selection and inhibits the expression of MAPT/Tau exon 10.

Its subcellular location is the nucleus. The protein resides in the nucleus speckle. Functionally, plays a role in constitutive splicing and modulates the selection of alternative splice sites. Plays a role in the alternative splicing of MAPT/Tau exon 10. Binds to alternative exons of TNC pre-mRNA and promotes the expression of alternatively spliced TNC. Plays a role in wound healing and in the regulation of keratinocyte differentiation and proliferation via its role in alternative splicing. The sequence is that of Serine/arginine-rich splicing factor 6 (SRSF6) from Oryctolagus cuniculus (Rabbit).